An 87-amino-acid chain; its full sequence is Apoptosis inducing factor BLCAP B (87 aa).

2 helical membrane passes run proline 19–glutamate 39 and cysteine 43–glycine 63.

Belongs to the BLCAP family.

Its subcellular location is the cytoplasm. The protein resides in the nucleus. It localises to the membrane. Functionally, acts as a tumor suppressor; induces growth arrest at G(1)/S checkpoint and apoptosis via RB1-dependent and p53/TP53- and NF-kappa-B-independent mechanisms. Modulates expression of genes involved in the regulation of proliferation, cell cycle and apoptosis. This chain is Apoptosis inducing factor BLCAP B (blcap-b), found in Xenopus laevis (African clawed frog).